Here is a 104-residue protein sequence, read N- to C-terminus: L-rhamnose mutarotase (104 aa).

Substrate is bound at residue Y18. The active-site Proton donor is the H22. Substrate is bound by residues Y41 and 76 to 77; that span reads WW.

Belongs to the rhamnose mutarotase family. As to quaternary structure, homodimer.

It localises to the cytoplasm. It carries out the reaction alpha-L-rhamnose = beta-L-rhamnose. The protein operates within carbohydrate metabolism; L-rhamnose metabolism. Involved in the anomeric conversion of L-rhamnose. This chain is L-rhamnose mutarotase, found in Klebsiella pneumoniae (strain 342).